A 752-amino-acid polypeptide reads, in one-letter code: Polyribonucleotide nucleotidyltransferase (752 aa).

Mg(2+)-binding residues include Asp-542 and Asp-548. The KH domain occupies 608–667 (PRITTIQIPVSKIGELIGPKGKNINALTEETGANISIEDDGTVFISAASGEAAEAAIEKI). An S1 motif domain is found at 679 to 748 (GERFLGTVVK…NRGKISLVPV (70 aa)).

Belongs to the polyribonucleotide nucleotidyltransferase family. Mg(2+) is required as a cofactor.

The protein resides in the cytoplasm. It carries out the reaction RNA(n+1) + phosphate = RNA(n) + a ribonucleoside 5'-diphosphate. Functionally, involved in mRNA degradation. Catalyzes the phosphorolysis of single-stranded polyribonucleotides processively in the 3'- to 5'-direction. The sequence is that of Polyribonucleotide nucleotidyltransferase from Corynebacterium efficiens (strain DSM 44549 / YS-314 / AJ 12310 / JCM 11189 / NBRC 100395).